The following is a 101-amino-acid chain: MLTLAHYLVLGAILFAMSIVGIFLNRRNIIIILMAIELMLLAVNTNFVAFSHYLGDVHGQIFVFFVLTVAAAEAAIGLAILVTLFRKLDTINVEDLDQLKG.

A run of 3 helical transmembrane segments spans residues 4–24, 29–49, and 61–81; these read LAHY…GIFL, IIII…NFVA, and IFVF…LAIL.

This sequence belongs to the complex I subunit 4L family. NDH-1 is composed of 14 different subunits. Subunits NuoA, H, J, K, L, M, N constitute the membrane sector of the complex.

It is found in the cell inner membrane. The enzyme catalyses a quinone + NADH + 5 H(+)(in) = a quinol + NAD(+) + 4 H(+)(out). Functionally, NDH-1 shuttles electrons from NADH, via FMN and iron-sulfur (Fe-S) centers, to quinones in the respiratory chain. The immediate electron acceptor for the enzyme in this species is believed to be ubiquinone. Couples the redox reaction to proton translocation (for every two electrons transferred, four hydrogen ions are translocated across the cytoplasmic membrane), and thus conserves the redox energy in a proton gradient. The protein is NADH-quinone oxidoreductase subunit K of Burkholderia vietnamiensis (strain G4 / LMG 22486) (Burkholderia cepacia (strain R1808)).